Consider the following 435-residue polypeptide: Divergent protein kinase domain 2B (435 aa).

The signal sequence occupies residues 1 to 33 (MESQWRGAAATAFHQHWLARLLLWVSTLSCSFS). N-linked (GlcNAc...) asparagine glycans are attached at residues Asn102 and Asn395.

It belongs to the DIPK family.

The protein resides in the secreted. The protein is Divergent protein kinase domain 2B (Dipk2b) of Mus musculus (Mouse).